The following is a 293-amino-acid chain: Nucleotide-binding protein Bcer98_3698 (293 aa).

An ATP-binding site is contributed by 14 to 21; the sequence is GMSGAGKT. A GTP-binding site is contributed by 65 to 68; it reads DLRG.

It belongs to the RapZ-like family.

In terms of biological role, displays ATPase and GTPase activities. This Bacillus cytotoxicus (strain DSM 22905 / CIP 110041 / 391-98 / NVH 391-98) protein is Nucleotide-binding protein Bcer98_3698.